Consider the following 226-residue polypeptide: Late protein I226R (226 aa).

A signal peptide spans 1–16; sequence MKMETFLVCLFHNADG. N-linked (GlcNAc...) asparagine; by host glycans are attached at residues N142 and N164.

It belongs to the asfivirus I226R family.

Its function is as follows. Plays a role in the inhibition of host NF-kappa-B and IRF3 signaling pathways. Mechanistically, promotes the degradation of host IKBKG through enhancing its ubiquitination leading to inhibition of both pathways. The chain is Late protein I226R from Ornithodoros (relapsing fever ticks).